The sequence spans 220 residues: Sec-independent protein translocase protein TatB (220 aa).

A helical transmembrane segment spans residues 1 to 21 (MFDIGFSELLLVLVIGLVVLG). Positions 190–220 (VTKQQIDTIDSHGTDLSSAGPSRIHQPGGDQ) are disordered.

This sequence belongs to the TatB family. In terms of assembly, the Tat system comprises two distinct complexes: a TatABC complex, containing multiple copies of TatA, TatB and TatC subunits, and a separate TatA complex, containing only TatA subunits. Substrates initially bind to the TatABC complex, which probably triggers association of the separate TatA complex to form the active translocon.

It localises to the cell inner membrane. Its function is as follows. Part of the twin-arginine translocation (Tat) system that transports large folded proteins containing a characteristic twin-arginine motif in their signal peptide across membranes. Together with TatC, TatB is part of a receptor directly interacting with Tat signal peptides. TatB may form an oligomeric binding site that transiently accommodates folded Tat precursor proteins before their translocation. The sequence is that of Sec-independent protein translocase protein TatB from Yersinia pseudotuberculosis serotype I (strain IP32953).